Reading from the N-terminus, the 510-residue chain is UDP-galactopyranose mutase (510 aa).

Residues Thr-18, Asp-38, Leu-46, and Gly-61 each contribute to the FAD site. UDP-alpha-D-galactose contacts are provided by Gly-61 and Gly-62. His-63 lines the FAD pocket. Positions 68, 91, and 93 each coordinate NADH. His-68, Arg-91, Ser-93, and Tyr-104 together coordinate NADPH. UDP-alpha-D-galactose is bound by residues Tyr-104, Gln-107, Met-159, Tyr-162, Asn-163, Trp-167, and Arg-182. Position 203 (Asn-203) interacts with NADPH. Asn-207 provides a ligand contact to UDP-alpha-D-galactose. Residue Val-242 participates in FAD binding. NADPH is bound by residues Trp-315 and Tyr-317. UDP-alpha-D-galactose contacts are provided by Tyr-317, Arg-327, and Tyr-419. Residue Arg-327 participates in FAD binding. Positions 419 and 447 each coordinate NADH. The NADPH site is built by Tyr-419 and Arg-447. Arg-447 provides a ligand contact to FAD. Position 453 (Tyr-453) interacts with UDP-alpha-D-galactose. Residues Gly-456, Asn-457, and Gln-458 each coordinate FAD. Asn-457 contributes to the UDP-alpha-D-galactose binding site. Asn-457 contacts NADH. Asn-457 is a binding site for NADPH. His-460 contributes to the NADPH binding site. Ser-461 is a binding site for FAD.

This sequence belongs to the UDP-galactopyranose/dTDP-fucopyranose mutase family. As to quaternary structure, homotetramer. It depends on FAD as a cofactor.

The enzyme catalyses UDP-alpha-D-galactose = UDP-alpha-D-galactofuranose. Functionally, UDP-galactopyranose mutase, key flavoenzyme of galactofuranose metabolism that catalyzes the 6-to-5 ring contraction of UDP-galactopyranose to UDP-galactofuranose, the donor used by various galacto-furanosyltransferases. Controls the biosynthesis of galactomannan and galactofuranose containing glycoconjugates. The flavin functions as nucleophile, forming a flavin-sugar adduct that facilitates galactose-ring opening and contraction. The binding of UDP-galactopyranose induces profound conformational changes in the enzyme and two loops on opposite sides of the active site move toward each other by over 10 Angstroms to cover the substrate and create a closed active site. This is UDP-galactopyranose mutase from Aspergillus fumigatus (Neosartorya fumigata).